Reading from the N-terminus, the 477-residue chain is Aspartyl/glutamyl-tRNA(Asn/Gln) amidotransferase subunit B (477 aa).

The protein belongs to the GatB/GatE family. GatB subfamily. Heterotrimer of A, B and C subunits.

The enzyme catalyses L-glutamyl-tRNA(Gln) + L-glutamine + ATP + H2O = L-glutaminyl-tRNA(Gln) + L-glutamate + ADP + phosphate + H(+). It catalyses the reaction L-aspartyl-tRNA(Asn) + L-glutamine + ATP + H2O = L-asparaginyl-tRNA(Asn) + L-glutamate + ADP + phosphate + 2 H(+). In terms of biological role, allows the formation of correctly charged Asn-tRNA(Asn) or Gln-tRNA(Gln) through the transamidation of misacylated Asp-tRNA(Asn) or Glu-tRNA(Gln) in organisms which lack either or both of asparaginyl-tRNA or glutaminyl-tRNA synthetases. The reaction takes place in the presence of glutamine and ATP through an activated phospho-Asp-tRNA(Asn) or phospho-Glu-tRNA(Gln). This is Aspartyl/glutamyl-tRNA(Asn/Gln) amidotransferase subunit B from Ureaplasma parvum serovar 3 (strain ATCC 27815 / 27 / NCTC 11736).